We begin with the raw amino-acid sequence, 479 residues long: Variant surface glycoprotein ILTAT 1.22 (479 aa).

Positions 1 to 12 are cleaved as a signal peptide; it reads MDTAQVFALFYM. N-linked (GlcNAc...) asparagine glycosylation is found at Asn-120 and Asn-458. Asn-462 is lipidated: GPI-anchor amidated asparagine. Positions 463-479 are cleaved as a propeptide — removed in mature form; that stretch reads NSFAIKTSTLLLAVLLF.

It is found in the cell membrane. Its function is as follows. VSG forms a coat on the surface of the parasite. The trypanosome evades the immune response of the host by expressing a series of antigenically distinct VSGs from an estimated 1000 VSG genes. The chain is Variant surface glycoprotein ILTAT 1.22 from Trypanosoma brucei brucei.